The sequence spans 210 residues: Probable glutathione peroxidase 8 (210 aa).

The chain crosses the membrane as a helical span at residues 13-35; sequence ASRAGLFKVLLSVALCMGSLYLL.

Belongs to the glutathione peroxidase family.

It localises to the membrane. It carries out the reaction 2 glutathione + H2O2 = glutathione disulfide + 2 H2O. The polypeptide is Probable glutathione peroxidase 8 (gpx8) (Danio rerio (Zebrafish)).